Here is a 160-residue protein sequence, read N- to C-terminus: Lipoprotein signal peptidase (160 aa).

Helical transmembrane passes span 59 to 79 (PEGI…YVWI) and 84 to 104 (SPLF…NLID). Residues Asp113 and Asp139 contribute to the active site. The chain crosses the membrane as a helical span at residues 132–152 (WPIFNIADACITIGACLLFFF).

This sequence belongs to the peptidase A8 family.

The protein localises to the cell inner membrane. The catalysed reaction is Release of signal peptides from bacterial membrane prolipoproteins. Hydrolyzes -Xaa-Yaa-Zaa-|-(S,diacylglyceryl)Cys-, in which Xaa is hydrophobic (preferably Leu), and Yaa (Ala or Ser) and Zaa (Gly or Ala) have small, neutral side chains.. Its pathway is protein modification; lipoprotein biosynthesis (signal peptide cleavage). Its function is as follows. This protein specifically catalyzes the removal of signal peptides from prolipoproteins. The chain is Lipoprotein signal peptidase from Chlorobaculum parvum (strain DSM 263 / NCIMB 8327) (Chlorobium vibrioforme subsp. thiosulfatophilum).